We begin with the raw amino-acid sequence, 521 residues long: D-aminoacyl-tRNA deacylase (521 aa).

Disordered regions lie at residues 323-353 and 499-521; these read AVGTVHTKDSTDIDTGTNHNVDAERTESEDS and VFSTSSSSSSSSSSSSSSSSSSS. Residues 343–353 show a composition bias toward basic and acidic residues; that stretch reads VDAERTESEDS. Residues 501–521 show a composition bias toward low complexity; sequence STSSSSSSSSSSSSSSSSSSS.

This sequence belongs to the DtdA deacylase family. In terms of assembly, monomer. It depends on Zn(2+) as a cofactor.

It carries out the reaction a D-aminoacyl-tRNA + H2O = a tRNA + a D-alpha-amino acid + H(+). It catalyses the reaction glycyl-tRNA(Ala) + H2O = tRNA(Ala) + glycine + H(+). Its function is as follows. D-aminoacyl-tRNA deacylase with broad substrate specificity. By recycling D-aminoacyl-tRNA to D-amino acids and free tRNA molecules, this enzyme counteracts the toxicity associated with the formation of D-aminoacyl-tRNA entities in vivo. This chain is D-aminoacyl-tRNA deacylase, found in Haloquadratum walsbyi (strain DSM 16790 / HBSQ001).